Reading from the N-terminus, the 234-residue chain is UPF0758 protein STH371 (234 aa).

The MPN domain occupies 110–232 (DLCNPRAVFE…YTSFRERGLL (123 aa)). Zn(2+)-binding residues include histidine 181, histidine 183, and aspartate 194. The JAMM motif signature appears at 181–194 (HNHPSGDPTPSRED).

It belongs to the UPF0758 family.

This chain is UPF0758 protein STH371, found in Symbiobacterium thermophilum (strain DSM 24528 / JCM 14929 / IAM 14863 / T).